Reading from the N-terminus, the 311-residue chain is Manganese-dependent ADP-ribose/CDP-alcohol diphosphatase (311 aa).

D17, Q19, D64, N99, H218, H255, and H257 together coordinate Zn(2+).

Belongs to the ADPRibase-Mn family. In terms of assembly, monomer. Requires Mg(2+) as cofactor.

It carries out the reaction CDP-choline + H2O = phosphocholine + CMP + 2 H(+). The enzyme catalyses ADP-D-ribose + H2O = D-ribose 5-phosphate + AMP + 2 H(+). It catalyses the reaction CDP-glycerol + H2O = sn-glycerol 3-phosphate + CMP + 2 H(+). In terms of biological role, hydrolyzes ADP-ribose, IDP-ribose, CDP-glycerol, CDP-choline and CDP-ethanolamine, but not other non-reducing ADP-sugars or CDP-glucose. The sequence is that of Manganese-dependent ADP-ribose/CDP-alcohol diphosphatase from Arabidopsis thaliana (Mouse-ear cress).